A 226-amino-acid polypeptide reads, in one-letter code: Cytidylate kinase (226 aa).

14–22 (GPAGAGKST) lines the ATP pocket.

Belongs to the cytidylate kinase family. Type 1 subfamily.

It is found in the cytoplasm. The enzyme catalyses CMP + ATP = CDP + ADP. The catalysed reaction is dCMP + ATP = dCDP + ADP. The sequence is that of Cytidylate kinase from Symbiobacterium thermophilum (strain DSM 24528 / JCM 14929 / IAM 14863 / T).